A 247-amino-acid polypeptide reads, in one-letter code: 3-deoxy-manno-octulosonate cytidylyltransferase (247 aa).

This sequence belongs to the KdsB family.

It localises to the cytoplasm. It carries out the reaction 3-deoxy-alpha-D-manno-oct-2-ulosonate + CTP = CMP-3-deoxy-beta-D-manno-octulosonate + diphosphate. It functions in the pathway nucleotide-sugar biosynthesis; CMP-3-deoxy-D-manno-octulosonate biosynthesis; CMP-3-deoxy-D-manno-octulosonate from 3-deoxy-D-manno-octulosonate and CTP: step 1/1. The protein operates within bacterial outer membrane biogenesis; lipopolysaccharide biosynthesis. Its function is as follows. Activates KDO (a required 8-carbon sugar) for incorporation into bacterial lipopolysaccharide in Gram-negative bacteria. The sequence is that of 3-deoxy-manno-octulosonate cytidylyltransferase from Chlorobium limicola (strain DSM 245 / NBRC 103803 / 6330).